The sequence spans 261 residues: MKIQVMLIIIFVGIFTICLAENATKSNESDKSDKSDKSDKPDLSDAIGKVGALLGDPVVTTAIEVLKSLKTESSTTISDRYDQTGFLSINNNYDYSKGAILISRMDELISHWLDDNTYDFITDKQKKTISKALKEYTLQLAEDPYYKQKYELSFSDGKGSLFMMILSVSPHPTNINAIRWEKYILQTDFVPAPSYVIVTESDCDILSCDRTDKIVYLPTVLNQAHMDQIISMNLGMLTGFTNSLNNFNSLNNPDNSNMLGK.

The N-terminal stretch at 1-20 (MKIQVMLIIIFVGIFTICLA) is a signal peptide. Asparagine 22 and asparagine 27 each carry an N-linked (GlcNAc...) asparagine; by host glycan.

It is found in the secreted. This is an uncharacterized protein from Acanthamoeba polyphaga (Amoeba).